The sequence spans 75 residues: U6-lycotoxin-Ls1b (75 aa).

Positions 1 to 21 (MKLLLFTALVLVVISLIEVEA) are cleaved as a signal peptide. The propeptide occupies 22-25 (ENER).

This sequence belongs to the neurotoxin 19 (CSTX) family. 06 (U6-Lctx) subfamily. In terms of processing, contains 4 disulfide bonds. As to expression, expressed by the venom gland.

It localises to the secreted. In Lycosa singoriensis (Wolf spider), this protein is U6-lycotoxin-Ls1b.